The primary structure comprises 498 residues: ATP synthase subunit beta, chloroplastic (498 aa).

172–179 lines the ATP pocket; sequence GGAGVGKT.

The protein belongs to the ATPase alpha/beta chains family. As to quaternary structure, F-type ATPases have 2 components, CF(1) - the catalytic core - and CF(0) - the membrane proton channel. CF(1) has five subunits: alpha(3), beta(3), gamma(1), delta(1), epsilon(1). CF(0) has four main subunits: a(1), b(1), b'(1) and c(9-12).

The protein localises to the plastid. It is found in the chloroplast thylakoid membrane. The enzyme catalyses ATP + H2O + 4 H(+)(in) = ADP + phosphate + 5 H(+)(out). Its function is as follows. Produces ATP from ADP in the presence of a proton gradient across the membrane. The catalytic sites are hosted primarily by the beta subunits. This chain is ATP synthase subunit beta, chloroplastic, found in Sorghum bicolor (Sorghum).